The following is a 250-amino-acid chain: tRNA (guanine-N(1)-)-methyltransferase (250 aa).

S-adenosyl-L-methionine-binding positions include G115 and 135-140 (LGDFVL).

The protein belongs to the RNA methyltransferase TrmD family. In terms of assembly, homodimer.

It localises to the cytoplasm. It catalyses the reaction guanosine(37) in tRNA + S-adenosyl-L-methionine = N(1)-methylguanosine(37) in tRNA + S-adenosyl-L-homocysteine + H(+). In terms of biological role, specifically methylates guanosine-37 in various tRNAs. The polypeptide is tRNA (guanine-N(1)-)-methyltransferase (Legionella pneumophila (strain Paris)).